A 153-amino-acid chain; its full sequence is Large ribosomal subunit protein uL15 (153 aa).

The segment at Arg21–Ser42 is disordered. A compositionally biased stretch (gly residues) spans Ile23–Ile35.

Belongs to the universal ribosomal protein uL15 family. As to quaternary structure, part of the 50S ribosomal subunit.

Functionally, binds to the 23S rRNA. The protein is Large ribosomal subunit protein uL15 of Rickettsia peacockii (strain Rustic).